Consider the following 243-residue polypeptide: Pyridoxine 5'-phosphate synthase (243 aa).

Asparagine 9 contacts 3-amino-2-oxopropyl phosphate. 11-12 (DH) is a binding site for 1-deoxy-D-xylulose 5-phosphate. Arginine 20 serves as a coordination point for 3-amino-2-oxopropyl phosphate. The active-site Proton acceptor is the histidine 45. 2 residues coordinate 1-deoxy-D-xylulose 5-phosphate: arginine 47 and histidine 52. The active-site Proton acceptor is glutamate 72. Residue threonine 102 coordinates 1-deoxy-D-xylulose 5-phosphate. Histidine 193 (proton donor) is an active-site residue. 3-amino-2-oxopropyl phosphate contacts are provided by residues glycine 194 and 215–216 (GH).

It belongs to the PNP synthase family. In terms of assembly, homooctamer; tetramer of dimers.

Its subcellular location is the cytoplasm. It catalyses the reaction 3-amino-2-oxopropyl phosphate + 1-deoxy-D-xylulose 5-phosphate = pyridoxine 5'-phosphate + phosphate + 2 H2O + H(+). It participates in cofactor biosynthesis; pyridoxine 5'-phosphate biosynthesis; pyridoxine 5'-phosphate from D-erythrose 4-phosphate: step 5/5. Functionally, catalyzes the complicated ring closure reaction between the two acyclic compounds 1-deoxy-D-xylulose-5-phosphate (DXP) and 3-amino-2-oxopropyl phosphate (1-amino-acetone-3-phosphate or AAP) to form pyridoxine 5'-phosphate (PNP) and inorganic phosphate. The polypeptide is Pyridoxine 5'-phosphate synthase (Vibrio vulnificus (strain CMCP6)).